The following is a 396-amino-acid chain: Elongation factor Tu (396 aa).

One can recognise a tr-type G domain in the interval Lys-10 to Thr-206. A G1 region spans residues Gly-19–Thr-26. Position 19 to 26 (Gly-19 to Thr-26) interacts with GTP. Residue Thr-26 participates in Mg(2+) binding. The G2 stretch occupies residues Gly-60–Ser-64. The interval Asp-81–Gly-84 is G3. Residues Asp-81 to His-85 and Asn-136 to Asp-139 contribute to the GTP site. Positions Asn-136–Asp-139 are G4. Residues Ser-174–Leu-176 form a G5 region.

The protein belongs to the TRAFAC class translation factor GTPase superfamily. Classic translation factor GTPase family. EF-Tu/EF-1A subfamily. As to quaternary structure, monomer.

It localises to the cytoplasm. It catalyses the reaction GTP + H2O = GDP + phosphate + H(+). GTP hydrolase that promotes the GTP-dependent binding of aminoacyl-tRNA to the A-site of ribosomes during protein biosynthesis. In Pelagibacter ubique (strain HTCC1062), this protein is Elongation factor Tu.